A 219-amino-acid chain; its full sequence is Protein RhiB (219 aa).

Polar residues predominate over residues 174–195 (AGISQQGNAAGTSISSKSTGSP). Positions 174–201 (AGISQQGNAAGTSISSKSTGSPENPART) are disordered.

May be involved in plant-microbe interaction. The chain is Protein RhiB (rhiB) from Rhizobium leguminosarum bv. viciae.